The primary structure comprises 366 residues: Carbamoyl phosphate synthase small chain (366 aa).

Residues 1 to 171 form a CPSase region; the sequence is MQSKRYLVLE…KTPYVSTGKD (171 aa). The L-glutamine site is built by serine 47, glycine 221, and glycine 223. The 188-residue stretch at 173–360 folds into the Glutamine amidotransferase type-1 domain; the sequence is SVVLVDFGKK…VAMMTNFKEK (188 aa). Cysteine 248 serves as the catalytic Nucleophile. Residues leucine 249, glutamine 252, asparagine 290, glycine 292, and tyrosine 293 each contribute to the L-glutamine site. Catalysis depends on residues histidine 333 and glutamate 335.

It belongs to the CarA family. In terms of assembly, composed of two chains; the small (or glutamine) chain promotes the hydrolysis of glutamine to ammonia, which is used by the large (or ammonia) chain to synthesize carbamoyl phosphate. Tetramer of heterodimers (alpha,beta)4.

It catalyses the reaction hydrogencarbonate + L-glutamine + 2 ATP + H2O = carbamoyl phosphate + L-glutamate + 2 ADP + phosphate + 2 H(+). It carries out the reaction L-glutamine + H2O = L-glutamate + NH4(+). The protein operates within amino-acid biosynthesis; L-arginine biosynthesis; carbamoyl phosphate from bicarbonate: step 1/1. Its pathway is pyrimidine metabolism; UMP biosynthesis via de novo pathway; (S)-dihydroorotate from bicarbonate: step 1/3. Functionally, small subunit of the glutamine-dependent carbamoyl phosphate synthetase (CPSase). CPSase catalyzes the formation of carbamoyl phosphate from the ammonia moiety of glutamine, carbonate, and phosphate donated by ATP, constituting the first step of 2 biosynthetic pathways, one leading to arginine and/or urea and the other to pyrimidine nucleotides. The small subunit (glutamine amidotransferase) binds and cleaves glutamine to supply the large subunit with the substrate ammonia. The chain is Carbamoyl phosphate synthase small chain from Staphylococcus aureus (strain COL).